A 339-amino-acid chain; its full sequence is Ribosomal RNA small subunit methyltransferase H (339 aa).

S-adenosyl-L-methionine-binding positions include 56-58 (GGH), Asp-76, Phe-102, Asp-123, and Gln-130. Disordered stretches follow at residues 274 to 309 (RHSR…KAEV) and 320 to 339 (LRVA…PQHS). Residues 325 to 339 (RTDTPYNTDPSPQHS) are compositionally biased toward polar residues.

The protein belongs to the methyltransferase superfamily. RsmH family.

The protein resides in the cytoplasm. The catalysed reaction is cytidine(1402) in 16S rRNA + S-adenosyl-L-methionine = N(4)-methylcytidine(1402) in 16S rRNA + S-adenosyl-L-homocysteine + H(+). Specifically methylates the N4 position of cytidine in position 1402 (C1402) of 16S rRNA. The polypeptide is Ribosomal RNA small subunit methyltransferase H (Psychrobacter sp. (strain PRwf-1)).